Reading from the N-terminus, the 308-residue chain is Isoflavone reductase-like protein (308 aa).

Residues 11–17 (GGTGYIG), arginine 36, and lysine 45 each bind NADP(+). Residue lysine 133 is the Proton acceptor of the active site. NADP(+) is bound at residue arginine 137.

The protein belongs to the NmrA-type oxidoreductase family. Isoflavone reductase subfamily. In terms of assembly, homodimer.

Its subcellular location is the cytoplasm. This chain is Isoflavone reductase-like protein, found in Olea europaea (Common olive).